Consider the following 112-residue polypeptide: Urease subunit gamma (112 aa).

It belongs to the urease gamma subunit family. Heterotrimer of UreA (gamma), UreB (beta) and UreC (alpha) subunits. Three heterotrimers associate to form the active enzyme.

Its subcellular location is the cytoplasm. The catalysed reaction is urea + 2 H2O + H(+) = hydrogencarbonate + 2 NH4(+). It participates in nitrogen metabolism; urea degradation; CO(2) and NH(3) from urea (urease route): step 1/1. The sequence is that of Urease subunit gamma from Gloeothece citriformis (strain PCC 7424) (Cyanothece sp. (strain PCC 7424)).